Reading from the N-terminus, the 176-residue chain is Prepronociceptin (176 aa).

The signal sequence occupies residues 1–19 (MKVLLCDLLLLSLFSSVFS). 2 propeptides span residues 20-95 (SCQR…MQHL) and 169-176 (TLHQNGNV).

The protein belongs to the opioid neuropeptide precursor family. Specific enzymatic cleavages at paired basic residues probably yield other active peptides besides nociceptin. Post-translationally, the N-terminal domain contains 6 conserved cysteines thought to be involved in disulfide bonding and/or processing. In terms of tissue distribution, predominantly expressed in the brain and spinal cord. Also expressed and secreted by peripheral blood neutrophils following degranulation.

The protein resides in the secreted. Functionally, ligand of the opioid receptor-like receptor OPRL1. It may act as a transmitter in the brain by modulating nociceptive and locomotor behavior. May be involved in neuronal differentiation and development. In terms of biological role, blocks nociceptin action in pain transmission by inhibiting nociceptin-induced hyperalgesia and allodynia. Its function is as follows. Has potent analgesic activity. The protein is Prepronociceptin (PNOC) of Homo sapiens (Human).